The sequence spans 131 residues: Fluoride-specific ion channel FluC 2 (131 aa).

4 helical membrane-spanning segments follow: residues 5-25 (SAVF…NLWI), 35-55 (WLEN…FMIG), 59-79 (PLLS…MSTF), and 95-115 (LLYV…GVFV). Positions 71 and 74 each coordinate Na(+).

The protein belongs to the fluoride channel Fluc/FEX (TC 1.A.43) family.

It is found in the cell membrane. The catalysed reaction is fluoride(in) = fluoride(out). Na(+) is not transported, but it plays an essential structural role and its presence is essential for fluoride channel function. In terms of biological role, fluoride-specific ion channel. Important for reducing fluoride concentration in the cell, thus reducing its toxicity. This Bacillus subtilis (strain 168) protein is Fluoride-specific ion channel FluC 2.